Here is a 244-residue protein sequence, read N- to C-terminus: 7-cyano-7-deazaguanine synthase (244 aa).

14–24 (FSGGQDSATCV) lines the ATP pocket. Residues cysteine 202, cysteine 217, cysteine 220, and cysteine 223 each contribute to the Zn(2+) site.

The protein belongs to the QueC family. It depends on Zn(2+) as a cofactor.

The enzyme catalyses 7-carboxy-7-deazaguanine + NH4(+) + ATP = 7-cyano-7-deazaguanine + ADP + phosphate + H2O + H(+). It functions in the pathway purine metabolism; 7-cyano-7-deazaguanine biosynthesis. Catalyzes the ATP-dependent conversion of 7-carboxy-7-deazaguanine (CDG) to 7-cyano-7-deazaguanine (preQ(0)). In Burkholderia mallei (strain NCTC 10229), this protein is 7-cyano-7-deazaguanine synthase.